A 36-amino-acid polypeptide reads, in one-letter code: Potassium channel toxin alpha-KTx 2.7 (36 aa).

3 cysteine pairs are disulfide-bonded: Cys7-Cys29, Cys13-Cys34, and Cys17-Cys36.

It belongs to the short scorpion toxin superfamily. Potassium channel inhibitor family. Alpha-KTx 02 subfamily. As to expression, expressed by the venom gland.

Its subcellular location is the secreted. In terms of biological role, inhibitor of voltage-gated potassium channels (Kv). This protein is capable of displacing the binding of radio-labeled noxiustoxin (AC P08815) to rat brain synaptosomes with high affinity (about 100 pM). It is also capable of inhibiting transient potassium-currents (resembling I(A)-type currents), in cultured rat cerebellar granule cells. About 50% of the peak currents are reduced by application of a 1.5 uM solution of this toxin. Is lethal to mice (when less than 100 ug are injected). This chain is Potassium channel toxin alpha-KTx 2.7, found in Centruroides limpidus (Mexican scorpion).